The chain runs to 119 residues: Immunoglobulin heavy variable 3-15 (119 aa).

The first 19 residues, 1–19, serve as a signal peptide directing secretion; that stretch reads MEFGLSWIFLAAILKGVQC. Positions 20-44 are framework-1; the sequence is EVQLVESGGGLVKPGGSLRLSCAAS. In terms of domain architecture, Ig-like spans 20 to 119; that stretch reads EVQLVESGGG…EDTAVYYCTT (100 aa). A disulfide bridge links cysteine 41 with cysteine 117. The interval 45 to 52 is complementarity-determining-1; it reads GFTFSNAW. The framework-2 stretch occupies residues 53–69; that stretch reads MSWVRQAPGKGLEWVGR. A complementarity-determining-2 region spans residues 70–79; that stretch reads IKSKTDGGTT. The segment at 80–117 is framework-3; sequence DYAAPVKGRFTISRDDSKNTLYLQMNSLKTEDTAVYYC. Residues 118-119 are complementarity-determining-3; the sequence is TT.

Immunoglobulins are composed of two identical heavy chains and two identical light chains; disulfide-linked.

The protein resides in the secreted. It is found in the cell membrane. V region of the variable domain of immunoglobulin heavy chains that participates in the antigen recognition. Immunoglobulins, also known as antibodies, are membrane-bound or secreted glycoproteins produced by B lymphocytes. In the recognition phase of humoral immunity, the membrane-bound immunoglobulins serve as receptors which, upon binding of a specific antigen, trigger the clonal expansion and differentiation of B lymphocytes into immunoglobulins-secreting plasma cells. Secreted immunoglobulins mediate the effector phase of humoral immunity, which results in the elimination of bound antigens. The antigen binding site is formed by the variable domain of one heavy chain, together with that of its associated light chain. Thus, each immunoglobulin has two antigen binding sites with remarkable affinity for a particular antigen. The variable domains are assembled by a process called V-(D)-J rearrangement and can then be subjected to somatic hypermutations which, after exposure to antigen and selection, allow affinity maturation for a particular antigen. This chain is Immunoglobulin heavy variable 3-15, found in Homo sapiens (Human).